The sequence spans 1218 residues: Stress response protein nst1 (1218 aa).

Residues 1-26 (MPANQRKNTSQSSYLQTPRNIATPLT) are compositionally biased toward polar residues. 8 disordered regions span residues 1–237 (MPAN…QEER), 306–391 (ANHQ…HATD), 431–508 (RMAR…RMEE), 544–745 (ELEE…KLSH), 765–810 (PIKL…PPGK), 911–1010 (PMHG…DTDE), 1018–1037 (ARRSSAAPGNPGRQNFLPPP), and 1190–1218 (GAPGEIGSPISGGASRNLGPPGRAPIGGF). The segment covering 34 to 50 (TTPKKSSTSDSSETSPT) has biased composition (low complexity). The span at 51-72 (MAQTTTKSNGQLPTPPTNNGAP) shows a compositional bias: polar residues. Basic residues predominate over residues 75 to 85 (NRKKQKRRAKQ). Over residues 86–95 (AARAAAEQAQ) the composition is skewed to low complexity. The segment covering 107–123 (DVKRQMQELEARFRETG) has biased composition (basic and acidic residues). The span at 124 to 149 (LDEQYDDDEQFDPADENAYYSDEEGD) shows a compositional bias: acidic residues. Over residues 159–171 (GSSTNGYAIPTTN) the composition is skewed to polar residues. Residues 174-183 (KKQKKKKKSK) are compositionally biased toward basic residues. A compositionally biased stretch (low complexity) spans 206 to 216 (SLPLPLQSPPS). Positions 224 to 237 (SKEKIWNTSSQEER) are enriched in basic and acidic residues. Positions 313-322 (GPPPMMPPPR) are enriched in pro residues. The span at 354–382 (LGDDEDEEGDEEYSEDDGDEDDFSEEEPE) shows a compositional bias: acidic residues. Residues 421-714 (IEMMEQLAER…EARELQKREE (294 aa)) are a coiled coil. The span at 431 to 440 (RMAREEDAKE) shows a compositional bias: basic and acidic residues. Positions 470–501 (PEEDEYDDEEDDEDEYDSQEEDYDEEEMDSMT) are enriched in acidic residues. Positions 544–715 (ELEEESRADS…ARELQKREEL (172 aa)) are enriched in basic and acidic residues. The span at 716 to 730 (SAQQAAVQAAQSAAH) shows a compositional bias: low complexity. Positions 769–796 (RTNSQQDNYSIPRTPSSKYQSISPNSVT) are enriched in polar residues. Residues 799-810 (PNSPGPIGPPGK) are compositionally biased toward pro residues. Over residues 940 to 963 (PPSQTHSRNQSGSFDGLSSATQAQ) the composition is skewed to polar residues.

This sequence belongs to the NST1 family.

It localises to the cytoplasm. Its function is as follows. May act as a negative regulator of salt tolerance. This is Stress response protein nst1 (nst1) from Botryotinia fuckeliana (strain B05.10) (Noble rot fungus).